A 510-amino-acid polypeptide reads, in one-letter code: Probable inorganic carbon transporter subunit DabB (510 aa).

The next 14 membrane-spanning stretches (helical) occupy residues 9 to 29, 37 to 57, 68 to 88, 105 to 122, 125 to 145, 158 to 178, 204 to 224, 226 to 246, 266 to 286, 303 to 323, 355 to 375, 382 to 402, 410 to 430, and 446 to 466; these read TLLTLFFIALSASWLSGLLFL, FVHIHIGIAALPSLVSLLALV, WHLDTLAWLMAFFVLTIGLII, YFALFTFTTGVSSVAWLS, LRFMIMCWGATLIGLVLLIGL, ISGYLFTISWIALLSAIIWLF, TGINLLIIVAVMIPAAQWPFQ, WLIESAVAPTPVSAIMHAGLV, QIILLIFSSISVLIGTGISLV, GFMLIQCALGAYLAAVIHLIL, LWMIVGRVLGLFIAIAFWFIT, LVSALILGWSLYFSWKQLVVF, IAGLIVLIGFSLIYFTVHNSL, and APAVIFVICILLFSSVICTFV.

Belongs to the inorganic carbon transporter (TC 9.A.2) DabB family. As to quaternary structure, forms a complex with DabA.

The protein localises to the cell membrane. Part of an energy-coupled inorganic carbon pump. Expression of both dabA and dabB (DA2) restores growth in ambient air to E.coli deleted of its carbonic anhydrase genes (called CAfree, deletion of 'can' and 'cynT'). This is Probable inorganic carbon transporter subunit DabB from Bacillus anthracis.